A 174-amino-acid polypeptide reads, in one-letter code: Nicotinamide-nucleotide adenylyltransferase (174 aa).

The protein belongs to the archaeal NMN adenylyltransferase family.

The protein localises to the cytoplasm. It carries out the reaction beta-nicotinamide D-ribonucleotide + ATP + H(+) = diphosphate + NAD(+). It functions in the pathway cofactor biosynthesis; NAD(+) biosynthesis; NAD(+) from nicotinamide D-ribonucleotide: step 1/1. This is Nicotinamide-nucleotide adenylyltransferase from Archaeoglobus fulgidus (strain ATCC 49558 / DSM 4304 / JCM 9628 / NBRC 100126 / VC-16).